The sequence spans 346 residues: Rhomboid protein 1, mitochondrial (346 aa).

The transit peptide at 1 to 73 directs the protein to the mitochondrion; it reads MSGVSSVMLG…RFFSQTSILK (73 aa). Transmembrane regions (helical) follow at residues 109–129, 145–165, 203–223, 246–266, 275–295, and 308–328; these read SMTI…PYLF, LVYA…LPKC, MLAL…SNFF, LAIV…LGCF, ILLF…ASVA, and FDYA…WYIS. S256 serves as the catalytic Nucleophile. H313 is a catalytic residue.

This sequence belongs to the peptidase S54 family.

It localises to the mitochondrion inner membrane. The enzyme catalyses Cleaves type-1 transmembrane domains using a catalytic dyad composed of serine and histidine that are contributed by different transmembrane domains.. In terms of biological role, mitochondrial rhomboid serine protease processing the mitochondrial membrane fusion regulator MGM1, and the cytochrome c peroxidase (CCP1). Required for TIM11 stability, ATP synthase complex assembly, mitochondrial morphology, cytochrome c (CYC1) storage and mitochondrial genome maintenance. This chain is Rhomboid protein 1, mitochondrial (PCP1), found in Saccharomyces cerevisiae (strain ATCC 204508 / S288c) (Baker's yeast).